Consider the following 337-residue polypeptide: MRFYNREKELNYLKNYVQLEPNSILFVYGPKSSGKSTVMMRVIKELENSNIVFFYYNLRKYATPTKDEFLSIFFEKSDKKYLLNKLEINLKIFKFGIEENFDFNNIKLNDVFAKINESINTVIKDGKRPVLVIDELQKLKNIYFNSGKSLLNELFNLFVSLTKMEHLCHVICLTSDTLFIDNVYRNSSLSEASEYYLIDWLKKDDIKKILKEEGFNKKEIDYCLNYLSLPYEISQLINNKKLGLSVEETIKRWINIEADGIKYLIDTSDLNEEEIYKVLSKFKDKIKINYKKDVKKEEMKYIKFLIENEILFYDVINGIIKPTSVKKWYAIKEILDK.

29–36 contributes to the ATP binding site; it reads GPKSSGKS.

Belongs to the archaeal ATPase family.

This is an uncharacterized protein from Methanocaldococcus jannaschii (strain ATCC 43067 / DSM 2661 / JAL-1 / JCM 10045 / NBRC 100440) (Methanococcus jannaschii).